We begin with the raw amino-acid sequence, 181 residues long: CDP-diacylglycerol--glycerol-3-phosphate 3-phosphatidyltransferase (181 aa).

A run of 4 helical transmembrane segments spans residues 8-28 (PNYL…LFYI), 35-55 (KLGA…GYIA), 64-84 (FGKM…TIML), and 148-168 (IIYL…LTII).

The protein belongs to the CDP-alcohol phosphatidyltransferase class-I family.

The protein localises to the cell membrane. It catalyses the reaction a CDP-1,2-diacyl-sn-glycerol + sn-glycerol 3-phosphate = a 1,2-diacyl-sn-glycero-3-phospho-(1'-sn-glycero-3'-phosphate) + CMP + H(+). Its pathway is phospholipid metabolism; phosphatidylglycerol biosynthesis; phosphatidylglycerol from CDP-diacylglycerol: step 1/2. This protein catalyzes the committed step to the synthesis of the acidic phospholipids. This chain is CDP-diacylglycerol--glycerol-3-phosphate 3-phosphatidyltransferase (pgsA), found in Rickettsia prowazekii (strain Madrid E).